A 758-amino-acid chain; its full sequence is Probable ubiquitin carboxyl-terminal hydrolase creB (758 aa).

The tract at residues 1–27 (MGSFLRSFRRDVGSSTPSVGATPAKKE) is disordered. In terms of domain architecture, USP spans 57–468 (FGMENYGNTC…CAYVLFYQET (412 aa)). The Nucleophile role is filled by C66. 2 disordered regions span residues 116-148 (AEAQ…DSSE) and 243-268 (QPIP…SKTP). Polar residues predominate over residues 253–268 (TTDSSRQSISSGSKTP). H419 (proton acceptor) is an active-site residue. The interval 514–744 (IPVQDEPQRH…KGDRAGHGKW (231 aa)) is disordered. Pro residues predominate over residues 554–563 (ATPPPVPPIP). Residues 573-631 (KKSDIQSKKERAKEEKERKAAEKEMEKQRRKEQEARVKENQRREEAELKAALEASKASK) are a coiled coil. Composition is skewed to basic and acidic residues over residues 573–650 (KKSD…DPKR) and 729–740 (DALKSPKGDRAG).

It belongs to the peptidase C19 family. As to quaternary structure, interacts with creA, creC and qutD.

The enzyme catalyses Thiol-dependent hydrolysis of ester, thioester, amide, peptide and isopeptide bonds formed by the C-terminal Gly of ubiquitin (a 76-residue protein attached to proteins as an intracellular targeting signal).. Ubiquitin thioesterase component of the regulatory network controlling carbon source utilization through ubiquitination and deubiquitination involving creA, creB, creC, creD and acrB. Deubiquitinates the creA catabolic repressor and the quinate permease qutD. Also plays a role in response to carbon starvation and the control of extracellular proteases activity. In Aspergillus niger (strain ATCC MYA-4892 / CBS 513.88 / FGSC A1513), this protein is Probable ubiquitin carboxyl-terminal hydrolase creB (creB).